Consider the following 450-residue polypeptide: IMP-specific 5'-nucleotidase 1 (450 aa).

Position 144 (H144) interacts with ATP. The Nucleophile role is filled by D172. IMP-binding residues include D172, D174, D180, T208, D376, and K384. The Mg(2+) site is built by D172 and D174. The active-site Proton donor is the D174. D411 provides a ligand contact to Mg(2+).

The protein belongs to the ISN1 family. Homotetramer. Mg(2+) is required as a cofactor.

It carries out the reaction IMP + H2O = inosine + phosphate. With respect to regulation, allosterically activated by ATP. ATP binding is a prerequisite to magnesium and substrate binding. ATP binds to 2 of the subunits in the homotetramer inducing a closure of these 2 subunits and the release of the C-terminal loop, thereby activating the enzyme. Its function is as follows. IMP-specific 5'-nucleotidase involved in IMP (inosine 5'-phosphate) degradation. The sequence is that of IMP-specific 5'-nucleotidase 1 (ISN1) from Saccharomyces cerevisiae (strain ATCC 204508 / S288c) (Baker's yeast).